Here is a 185-residue protein sequence, read N- to C-terminus: Elongation factor P (185 aa).

Belongs to the elongation factor P family.

Its subcellular location is the cytoplasm. It functions in the pathway protein biosynthesis; polypeptide chain elongation. Its function is as follows. Involved in peptide bond synthesis. Stimulates efficient translation and peptide-bond synthesis on native or reconstituted 70S ribosomes in vitro. Probably functions indirectly by altering the affinity of the ribosome for aminoacyl-tRNA, thus increasing their reactivity as acceptors for peptidyl transferase. This Limosilactobacillus fermentum (strain NBRC 3956 / LMG 18251) (Lactobacillus fermentum) protein is Elongation factor P.